The following is a 1045-amino-acid chain: DNA polymerase (1045 aa).

Residues 331–355 (IKENEESDSESDNDDEEDKKENDGA) form a disordered region. Over residues 335–348 (EESDSESDNDDEED) the composition is skewed to acidic residues.

This sequence belongs to the DNA polymerase type-B family.

The enzyme catalyses DNA(n) + a 2'-deoxyribonucleoside 5'-triphosphate = DNA(n+1) + diphosphate. This chain is DNA polymerase (dpo), found in Phaeocystis pouchetii (PpV01).